A 212-amino-acid chain; its full sequence is MKKNTLSAILMTLFLFISCNNSGKGGDSASTNPADESAKGPNLTEISKKITDSNAFVLAVKEVETLVLSIDELAKKAIGQKIDNNNGLAALNNQNGSLLAGAYAISTLITEKLSKLKNLEELKTEIAKAKKCSEEFTNKLKSGHADLGKQDATDDHAKAAILKTHATTDKGAKEFKDLFESVEGLLKAAQVALTNSVKELTSPVVAESPKKP.

A signal peptide spans 1–18 (MKKNTLSAILMTLFLFIS). Cys19 carries N-palmitoyl cysteine lipidation. Cys19 carries the S-diacylglycerol cysteine lipid modification.

It belongs to the OspC lipoprotein family. Homodimer. Interacts with tick Ixodes ricinus salivary protein Iric-1. Binds human (host) plasminogen. In terms of processing, the N-terminus is blocked.

It localises to the cell outer membrane. The protein localises to the cell surface. Functionally, major immunodominant protein in mammalian hosts. Required for initial stages of mammalian infection. Inhibits macrophage-mediated phagocytosis of the bacteria. Binds human plasminogen; this probably confers an extracellular protease activity on the bacteria that allows it to traverse tissue. Unlike closely related strain B31, its interaction with Ixodes ricinus salivary protein Iric-1 does not protect against antibody-mediated destruction in vitro. This Borreliella afzelii (strain PKo) (Borrelia afzelii) protein is Outer surface protein C.